A 621-amino-acid polypeptide reads, in one-letter code: 1-deoxy-D-xylulose-5-phosphate synthase (621 aa).

Residues His-80 and 121 to 123 (GHS) each bind thiamine diphosphate. Mg(2+) is bound at residue Asp-152. Residues 153–154 (GA), Asn-181, Tyr-288, and Glu-370 contribute to the thiamine diphosphate site. Asn-181 contacts Mg(2+).

Belongs to the transketolase family. DXPS subfamily. In terms of assembly, homodimer. The cofactor is Mg(2+). Thiamine diphosphate is required as a cofactor.

It catalyses the reaction D-glyceraldehyde 3-phosphate + pyruvate + H(+) = 1-deoxy-D-xylulose 5-phosphate + CO2. It functions in the pathway metabolic intermediate biosynthesis; 1-deoxy-D-xylulose 5-phosphate biosynthesis; 1-deoxy-D-xylulose 5-phosphate from D-glyceraldehyde 3-phosphate and pyruvate: step 1/1. In terms of biological role, catalyzes the acyloin condensation reaction between C atoms 2 and 3 of pyruvate and glyceraldehyde 3-phosphate to yield 1-deoxy-D-xylulose-5-phosphate (DXP). This is 1-deoxy-D-xylulose-5-phosphate synthase from Shewanella woodyi (strain ATCC 51908 / MS32).